Here is a 376-residue protein sequence, read N- to C-terminus: DNA replication and repair protein RecF (376 aa).

30-37 provides a ligand contact to ATP; the sequence is GHNGVGKT.

Belongs to the RecF family.

The protein localises to the cytoplasm. In terms of biological role, the RecF protein is involved in DNA metabolism; it is required for DNA replication and normal SOS inducibility. RecF binds preferentially to single-stranded, linear DNA. It also seems to bind ATP. The protein is DNA replication and repair protein RecF of Salinispora arenicola (strain CNS-205).